The primary structure comprises 209 residues: Iron-sulfur cluster assembly 2 homolog, mitochondrial (209 aa).

Residues 1-27 (MIRSIFKKNSSLPYFLKRSFITKPHSI) constitute a mitochondrion transit peptide. Fe cation contacts are provided by cysteine 134, cysteine 199, and cysteine 201.

It belongs to the HesB/IscA family. Requires Fe cation as cofactor.

The protein localises to the mitochondrion. Involved in the maturation of mitochondrial 4Fe-4S proteins functioning late in the iron-sulfur cluster assembly pathway. May be involved in the binding of an intermediate of Fe/S cluster assembly. The protein is Iron-sulfur cluster assembly 2 homolog, mitochondrial (isca2) of Dictyostelium discoideum (Social amoeba).